The following is a 338-amino-acid chain: RNA 3'-terminal phosphate cyclase (338 aa).

ATP-binding positions include Gln103 and 283–287; that span reads YLADQ. His308 (tele-AMP-histidine intermediate) is an active-site residue.

It belongs to the RNA 3'-terminal cyclase family. Type 1 subfamily.

It localises to the cytoplasm. The catalysed reaction is a 3'-end 3'-phospho-ribonucleotide-RNA + ATP = a 3'-end 2',3'-cyclophospho-ribonucleotide-RNA + AMP + diphosphate. Catalyzes the conversion of 3'-phosphate to a 2',3'-cyclic phosphodiester at the end of RNA. The mechanism of action of the enzyme occurs in 3 steps: (A) adenylation of the enzyme by ATP; (B) transfer of adenylate to an RNA-N3'P to produce RNA-N3'PP5'A; (C) and attack of the adjacent 2'-hydroxyl on the 3'-phosphorus in the diester linkage to produce the cyclic end product. The biological role of this enzyme is unknown but it is likely to function in some aspects of cellular RNA processing. The chain is RNA 3'-terminal phosphate cyclase from Escherichia coli O9:H4 (strain HS).